The chain runs to 330 residues: MSAPPTNQPPPLPPRSFDNQMSNPMINTGFGYGGGYGMNTFPGSGMYGGGGMYGGGMGYGGFGGGFNHMGYGQGPDSNFARLAEEQSRGAFQSIESVVNAVSSVANMLNSTHNAVYSSFRAVIGVVEQFGRLKTQLSSVVVSLAVFRWVYRFWRWLLVMLKLKPASYASAAEMAWGTSQPYATDVLGATRTPASVNWPAALFWVVAIGGPWLIYRCVSQMVQAAEEKRKWATGAAPHYTAQALFDFQASNEQELSFMNGETLRVAPKEEQPRVRGWLLASVADGSRIGLVPINYVRIVGKQSQSPPLTQQSNLDTFVNAFPARDLNSNIQ.

Residues 1 to 14 (MSAPPTNQPPPLPP) are compositionally biased toward pro residues. Residues 1 to 20 (MSAPPTNQPPPLPPRSFDNQ) are disordered. The chain crosses the membrane as a helical span at residues 193–213 (ASVNWPAALFWVVAIGGPWLI). An SH3 domain is found at 235–300 (APHYTAQALF…PINYVRIVGK (66 aa)).

This sequence belongs to the peroxin-13 family. Interacts with PEX14/prx-14; forming the PEX13-PEX14 docking complex.

The protein localises to the peroxisome membrane. In terms of biological role, component of the PEX13-PEX14 docking complex, a translocon channel that specifically mediates the import of peroxisomal cargo proteins bound to PEX5/prx-5 receptor. The PEX13-PEX14 docking complex forms a large import pore which can be opened to a diameter of about 9 nm. Mechanistically, PEX5/prx-5 receptor along with cargo proteins associates with the PEX14/prx-14 subunit of the PEX13-PEX14 docking complex in the cytosol, leading to the insertion of the receptor into the organelle membrane with the concomitant translocation of the cargo into the peroxisome matrix. The polypeptide is Peroxisomal membrane protein PEX13 (prx-13) (Caenorhabditis elegans).